The chain runs to 862 residues: DNA mismatch repair protein MutS (862 aa).

603–610 (GPNMSGKS) contributes to the ATP binding site.

The protein belongs to the DNA mismatch repair MutS family.

In terms of biological role, this protein is involved in the repair of mismatches in DNA. It is possible that it carries out the mismatch recognition step. This protein has a weak ATPase activity. In Bacillus velezensis (strain DSM 23117 / BGSC 10A6 / LMG 26770 / FZB42) (Bacillus amyloliquefaciens subsp. plantarum), this protein is DNA mismatch repair protein MutS.